Reading from the N-terminus, the 390-residue chain is tRNA(Met) cytidine acetate ligase (390 aa).

ATP is bound by residues 7–20 (VVEY…HKLH), Gly-101, Asn-162, and Arg-187.

The protein belongs to the TmcAL family.

The protein resides in the cytoplasm. It carries out the reaction cytidine(34) in elongator tRNA(Met) + acetate + ATP = N(4)-acetylcytidine(34) in elongator tRNA(Met) + AMP + diphosphate. Functionally, catalyzes the formation of N(4)-acetylcytidine (ac(4)C) at the wobble position of elongator tRNA(Met), using acetate and ATP as substrates. First activates an acetate ion to form acetyladenylate (Ac-AMP) and then transfers the acetyl group to tRNA to form ac(4)C34. The polypeptide is tRNA(Met) cytidine acetate ligase (Listeria monocytogenes serotype 4b (strain CLIP80459)).